The following is a 792-amino-acid chain: Serine/threonine-protein kinase Nek4 (792 aa).

In terms of domain architecture, Protein kinase spans 6–261 (YCYMRVVGRG…VRSILRQPYI (256 aa)). Residues 12-20 (VGRGSYGEV) and lysine 35 each bind ATP. Aspartate 131 acts as the Proton acceptor in catalysis. Position 165 is a phosphothreonine; by autocatalysis (threonine 165). 4 disordered regions span residues 329–358 (QEKP…NTGE), 379–515 (ANAG…LPSY), 527–611 (QQND…SITQ), and 628–657 (LSED…TNEM). A phosphoserine mark is found at serine 340 and serine 343. Polar residues-rich tracts occupy residues 412-421 (QGNTKSSDQP), 456-467 (DQVTGIIENQDS), 473-484 (QPHSSMSEPSLS), 496-505 (AHSGTKSQFQ), and 541-551 (VNSSRTSSTAS). Residue lysine 566 is modified to N6-methyllysine. Polar residues predominate over residues 602 to 611 (RFSSDCSITQ). The span at 641–657 (DKSDGDSREGKSHTNEM) shows a compositional bias: basic and acidic residues. Position 675 is a phosphoserine (serine 675).

Belongs to the protein kinase superfamily. NEK Ser/Thr protein kinase family. NIMA subfamily. Mn(2+) serves as cofactor. In terms of tissue distribution, expressed ubiquitously among various organs and is up-regulated in the testis.

It is found in the cytoplasm. The protein localises to the cell projection. Its subcellular location is the cilium. It carries out the reaction L-seryl-[protein] + ATP = O-phospho-L-seryl-[protein] + ADP + H(+). It catalyses the reaction L-threonyl-[protein] + ATP = O-phospho-L-threonyl-[protein] + ADP + H(+). Required for normal entry into proliferative arrest after a limited number of cell divisions, also called replicative senescence. Required for normal cell cycle arrest in response to double-stranded DNA damage. Protein kinase that seems to act exclusively upon threonine residues. This chain is Serine/threonine-protein kinase Nek4 (Nek4), found in Mus musculus (Mouse).